Reading from the N-terminus, the 124-residue chain is Probable S-adenosyl-L-methionine-binding protein VNG_1115H (124 aa).

A TsaA-like domain is found at 3-124 (ATPIGYADTR…PVLDLKPALD (122 aa)). S-adenosyl-L-methionine contacts are provided by residues 20 to 22 (PRQ), 58 to 59 (DD), R78, and 111 to 114 (AHGS).

The protein belongs to the tRNA methyltransferase O family.

The sequence is that of Probable S-adenosyl-L-methionine-binding protein VNG_1115H from Halobacterium salinarum (strain ATCC 700922 / JCM 11081 / NRC-1) (Halobacterium halobium).